The primary structure comprises 680 residues: Galactose oxidase (680 aa).

Residues 1–24 (MKHFLSLALCFSSINAVAVTVPHK) form the signal peptide. A propeptide spanning residues 25-41 (SGGTGSPEGSLQFLSLR) is cleaved from the precursor. An F5/8 type C domain is found at 42–189 (ASAPIGSAIS…SIAEINVFQA (148 aa)). A disulfide bridge links C59 with C68. 5 Kelch repeats span residues 223 to 268 (RVLM…HDMF), 279 to 321 (QIVV…TMSD), 323 to 372 (RVFT…LYRS), 436 to 490 (KILT…VLPD), and 492 to 544 (STFI…LLLP). Positions 269-313 (CPGISMDGNGQIVVTGGNDAKKTSLYDSSSDSWIPGPDMQVARGY) form a cross-link, 3'-(S-cysteinyl)-tyrosine (Cys-Tyr). Position 313 (Y313) interacts with Cu cation. Cu cation is bound by residues Y536 and H537. The active-site Proton acceptor is Y536. C556 and C559 are joined by a disulfide. Residue H622 coordinates Cu cation.

As to quaternary structure, monomer. Requires Cu(2+) as cofactor. In terms of processing, galactose oxidase contains a protein-derived free radical cofactor. In the active state, Tyr-313, which is cross-linked to Cys-269 via a thioether bond, is oxidized to a radical and acts with Cu(2+) as a two-electron acceptor in the oxidation reaction. The cross-link is believed to modulate the redox potential of the tyrosyl radical, which is further stabilized by a stacking interaction with Trp-331 in the active site. The post-translational formation of the cross-link is closely linked to the propeptide cleavage event, and both are copper-dependent, autocatalytic processes. The propeptide may act as an intramolecular chaperone, facilitating thioester bond formation and copper binding by positioning of active-site residues, including copper ligands.

It localises to the secreted. The enzyme catalyses D-galactose + O2 = D-galacto-hexodialdose + H2O2. In terms of biological role, catalyzes the sterospecific oxidation of primary alcohols to the corresponding aldehydes. The biologically relevant substrate of the enzyme is not known as the enzyme exhibits broad substrate specificity from small alcohols through sugars to oligo- and polysaccharides. The protein is Galactose oxidase (GAOA) of Gibberella zeae (strain ATCC MYA-4620 / CBS 123657 / FGSC 9075 / NRRL 31084 / PH-1) (Wheat head blight fungus).